The primary structure comprises 329 residues: Prostaglandin reductase 1 (329 aa).

The residue at position 18 (Thr18) is a Phosphothreonine. Phosphoserine is present on Ser20. NADP(+) is bound by residues 152–155 (GAVG), Lys178, Tyr193, Asn217, 239–245 (CGAISTY), 270–272 (FIV), and Asn321. Lys178 carries the post-translational modification N6-(2-hydroxyisobutyryl)lysine; alternate. Position 178 is an N6-acetyllysine; alternate (Lys178).

Belongs to the NADP-dependent oxidoreductase L4BD family. Monomer or homodimer. As to expression, ubiquitously distributed in various tissues and leukocytes, the kidney and liver had the highest enzyme activities.

The protein resides in the cytoplasm. The catalysed reaction is 13,14-dihydro-15-oxo-prostaglandin E1 + NADP(+) = 15-oxoprostaglandin E1 + NADPH + H(+). The enzyme catalyses 13,14-dihydro-15-oxo-prostaglandin E2 + NADP(+) = 15-oxoprostaglandin E2 + NADPH + H(+). It carries out the reaction 13,14-dihydro-15-oxo-prostaglandin E2 + NAD(+) = 15-oxoprostaglandin E2 + NADH + H(+). It catalyses the reaction 13,14-dihydro-15-oxo-prostaglandin F1alpha + NADP(+) = 15-oxoprostaglandin F1alpha + NADPH + H(+). The catalysed reaction is 13,14-dihydro-15-oxo-PGF2alpha + NADP(+) = 15-oxoprostaglandin F2alpha + NADPH + H(+). The enzyme catalyses leukotriene B4 + NADP(+) = 12-oxo-leukotriene B4 + NADPH + H(+). It carries out the reaction 20-hydroxy-leukotriene B4 + NADP(+) = 12-oxo-20-hydroxy-leukotriene B4 + NADPH + H(+). It catalyses the reaction 6-trans-leukotriene B4 + NADP(+) = 12-oxo-(5S)-hydroxy-(6E,8E,10E,14Z)-eicosatetraenoate + NADPH + H(+). The catalysed reaction is (5S,12S)-dihydroxy-(6E,10E,12E,14Z)-eicosatetraenoate + NADP(+) = 12-oxo-(5S)-hydroxy-(6E,8E,10E,14Z)-eicosatetraenoate + NADPH + H(+). The enzyme catalyses 15-oxo-(5S,6R)-dihydroxy-(7E,9E,11Z,13E)-eicosatetraenoate + NADH + H(+) = 15-oxo-(5S,6R)-dihydroxy-(7E,9E,11Z)-eicosatrienoate + NAD(+). It carries out the reaction an n-alkanal + NADP(+) = an alk-2-enal + NADPH + H(+). It catalyses the reaction hexanal + NADP(+) = (E)-hex-2-enal + NADPH + H(+). The catalysed reaction is octanal + NADP(+) = (2E)-octenal + NADPH + H(+). The enzyme catalyses decanal + NADP(+) = (2E)-decenal + NADPH + H(+). It carries out the reaction dodecanal + NADP(+) = (2E)-dodecenal + NADPH + H(+). It catalyses the reaction 4-hydroxynonanal + NADP(+) = (E)-4-hydroxynon-2-enal + NADPH + H(+). The catalysed reaction is pentan-2-one + NADP(+) = (E)-pent-3-en-2-one + NADPH + H(+). The enzyme catalyses nonan-2-one + NADP(+) = (3E)-nonen-2-one + NADPH + H(+). With respect to regulation, down-regulated by nonsteroidal anti-inflammatory drugs diclofenac, indomethacin and niflumic acid. NAD(P)H-dependent oxidoreductase involved in metabolic inactivation of pro- and anti-inflammatory eicosanoids: prostaglandins (PG), leukotrienes (LT) and lipoxins (LX). Preferentially uses NADPH over NADH as cofactor. Catalyzes with high efficiency the reduction of the 13,14 double bond of 15-oxoPGs, including 15-oxo-PGE1, 15-oxo-PGE2, 15-oxo-PGF1-alpha and 15-oxo-PGF2-alpha. Catalyzes with lower efficiency the oxidation of the hydroxyl group at C12 of LTB4 and its derivatives, converting them into biologically less active 12-oxo-LTB4 metabolites. Reduces 15-oxo-LXA4 to 13,14 dihydro-15-oxo-LXA4 and may promote neutrophil recruitment at the inflammatory site. Plays a role in metabolic detoxification of alkenals and ketones. Reduces alpha,beta-unsaturated alkenals and ketones, particularly those with medium-chain length, showing highest affinity toward (2E)-decenal and (3E)-3-nonen-2-one. May inactivate 4-hydroxy-2-nonenal, a cytotoxic lipid constituent of oxidized low-density lipoprotein particles. The sequence is that of Prostaglandin reductase 1 (PTGR1) from Sus scrofa (Pig).